We begin with the raw amino-acid sequence, 347 residues long: tRNA N6-adenosine threonylcarbamoyltransferase (347 aa).

Fe cation-binding residues include H109 and H113. Residues 136 to 140 (TVSGG), D169, G182, D186, and N284 each bind substrate. D312 is a Fe cation binding site.

The protein belongs to the KAE1 / TsaD family. Requires Fe(2+) as cofactor.

Its subcellular location is the cytoplasm. The catalysed reaction is L-threonylcarbamoyladenylate + adenosine(37) in tRNA = N(6)-L-threonylcarbamoyladenosine(37) in tRNA + AMP + H(+). Its function is as follows. Required for the formation of a threonylcarbamoyl group on adenosine at position 37 (t(6)A37) in tRNAs that read codons beginning with adenine. Is involved in the transfer of the threonylcarbamoyl moiety of threonylcarbamoyl-AMP (TC-AMP) to the N6 group of A37, together with TsaE and TsaB. TsaD likely plays a direct catalytic role in this reaction. In Chlorobium phaeobacteroides (strain BS1), this protein is tRNA N6-adenosine threonylcarbamoyltransferase.